The chain runs to 217 residues: MKLTIATVLASILLIGFANVANCSDCGCPTKATTTCAPPTKPTCKSTSTTTTTTTTTTTTTTTTRAPPTKPTCKSTSTTTTTTRAPPTKPTCKSTSTTTTTTRAPPTTTCKTSTTTTTTHKPTTHSTPKTKPTKHTTPKTKPTKHTTPKTKPTKHTTPTTTTTTTPKPCGCKSCGPGGEPCKGCGKRSALCQDLNGLLRNLERQVRQCVCGQPDWLL.

The first 23 residues, 1-23 (MKLTIATVLASILLIGFANVANC), serve as a signal peptide directing secretion. The span at 45-130 (KSTSTTTTTT…KPTTHSTPKT (86 aa)) shows a compositional bias: low complexity. Residues 45–163 (KSTSTTTTTT…KHTTPTTTTT (119 aa)) are disordered. Positions 131-154 (KPTKHTTPKTKPTKHTTPKTKPTK) are enriched in basic residues.

This Drosophila simulans (Fruit fly) protein is Salivary glue protein Sgs-3 (Sgs3).